The chain runs to 451 residues: Photosystem II CP43 reaction center protein (451 aa).

Over 1-46 (ATNRDQESSGFAWWAGNARLINLSGKLLGAHVAHAGLIVFWAGAMT) the chain is Cytoplasmic. Positions 13, 27, and 30 each coordinate chlorophyll a. A helical transmembrane segment spans residues 47–71 (LFELAHFIPEKPMYEQGLILIPHIA). Topologically, residues 72–111 (TLGWGVGPGGEVVDTFPFFVVGVVHLISSAVLGFGGVYHA) are lumenal. Residues valine 92 and glycine 106 each coordinate chlorophyll a. The chain crosses the membrane as a helical span at residues 112 to 133 (IRGPETLEEYSSFFGYDWKDKN). Residues 134 to 155 (KMTTILGFHLIVLGIGALLLVA) are Cytoplasmic-facing. Position 138 (isoleucine 138) interacts with chlorophyll a. The helical transmembrane segment at 156-178 (KAMFFGGLYDTWAPGGGDVRVIT) threads the bilayer. Over 179–232 (NPTLDPRVIFGYLLKSPFGGEGWIVSVNNLEDVVGGHIWIGLICIAGGIWHILT) the chain is Lumenal. Positions 211 and 225 each coordinate chlorophyll a. The chain crosses the membrane as a helical span at residues 233–253 (TPFGWARRAFIWSGEAYLSYS). At 254–268 (LGALSMMGFIATCFV) the chain is on the cytoplasmic side. Residues 269–290 (WFNNTVYPSEFYGPTGPEASQA) form a helical membrane-spanning segment. The Lumenal segment spans residues 291-424 (QAMTFLIRDQ…FLVGHLWHAG (134 aa)). Glutamate 345 is a [CaMn4O5] cluster binding site. The chlorophyll a site is built by leucine 404, phenylalanine 415, and glycine 418. A helical transmembrane segment spans residues 425 to 449 (RARAAAAGFEKGIDRESEPVLSMPS). Topologically, residues 450-451 (LD) are cytoplasmic.

Belongs to the PsbB/PsbC family. PsbC subfamily. As to quaternary structure, PSII is composed of 1 copy each of membrane proteins PsbA, PsbB, PsbC, PsbD, PsbE, PsbF, PsbH, PsbI, PsbJ, PsbK, PsbL, PsbM, PsbT, PsbX, PsbY, PsbZ, Psb30/Ycf12, peripheral proteins PsbO, CyanoQ (PsbQ), PsbU, PsbV and a large number of cofactors. It forms dimeric complexes. Binds multiple chlorophylls and provides some of the ligands for the Ca-4Mn-5O cluster of the oxygen-evolving complex. It may also provide a ligand for a Cl- that is required for oxygen evolution. PSII binds additional chlorophylls, carotenoids and specific lipids. is required as a cofactor.

It localises to the cellular thylakoid membrane. In terms of biological role, one of the components of the core complex of photosystem II (PSII). It binds chlorophyll and helps catalyze the primary light-induced photochemical processes of PSII. PSII is a light-driven water:plastoquinone oxidoreductase, using light energy to abstract electrons from H(2)O, generating O(2) and a proton gradient subsequently used for ATP formation. The chain is Photosystem II CP43 reaction center protein from Thermostichus vulcanus (Synechococcus vulcanus).